Consider the following 209-residue polypeptide: Uracil phosphoribosyltransferase (209 aa).

Residues arginine 79, arginine 104, and 131–139 (DPMLATGGS) contribute to the 5-phospho-alpha-D-ribose 1-diphosphate site. Uracil is bound by residues isoleucine 194 and 199-201 (GDA). Aspartate 200 is a 5-phospho-alpha-D-ribose 1-diphosphate binding site.

The protein belongs to the UPRTase family. It depends on Mg(2+) as a cofactor.

It carries out the reaction UMP + diphosphate = 5-phospho-alpha-D-ribose 1-diphosphate + uracil. It functions in the pathway pyrimidine metabolism; UMP biosynthesis via salvage pathway; UMP from uracil: step 1/1. Allosterically activated by GTP. In terms of biological role, catalyzes the conversion of uracil and 5-phospho-alpha-D-ribose 1-diphosphate (PRPP) to UMP and diphosphate. This is Uracil phosphoribosyltransferase from Anoxybacillus flavithermus (strain DSM 21510 / WK1).